The primary structure comprises 867 residues: Cadherin-related family member 1 (867 aa).

The first 21 residues, 1–21, serve as a signal peptide directing secretion; that stretch reads MKHEWNLCPSIFFSIFHICLS. Residues 22 to 707 are Extracellular-facing; the sequence is VQTNYGPYFF…SKDNPMKALG (686 aa). Cadherin domains follow at residues 39 to 138, 139 to 250, 251 to 357, 363 to 476, 477 to 580, and 572 to 692; these read NGNM…SPGF, LNTP…PPVF, VGTP…PPTF, PQNR…VPRF, SSEY…SPEF, and DIND…GPMA. Residues 708–728 traverse the membrane as a helical segment; that stretch reads VLAGVMAIMVVITIFISTAMF. Over 729-867 the chain is Cytoplasmic; sequence WRNKKSNRVM…KNAGSSMSFY (139 aa). Residues 777–825 form a disordered region; that stretch reads EMESGPKNENRNNNYQGIPVPPRAPCPPPPPRLMPKVSKTERSLPTVSG. A compositionally biased stretch (pro residues) spans 795–809; the sequence is PVPPRAPCPPPPPRL.

Expressed in photoreceptor cells of the outer nuclear layer of the retina and in the pinal gland.

Its subcellular location is the membrane. In terms of biological role, potential calcium-dependent cell-adhesion protein. The protein is Cadherin-related family member 1 (cdhr1) of Xenopus laevis (African clawed frog).